Consider the following 384-residue polypeptide: Helix-loop-helix protein delilah (384 aa).

Disordered stretches follow at residues 1–101 (MKSN…TANA) and 187–227 (EEAE…KIVP). Over residues 75–86 (KSRKNAPTKSKT) the composition is skewed to basic residues. Residues 94 to 153 (YRRKTANARERTRMREINTAFETLRHCVPEAIKGEDAANTNEKLTKITTLRLAMKYITML) form the bHLH domain. Residues 209–224 (KKSSAASKRQSQKQAK) are compositionally biased toward low complexity.

As to quaternary structure, efficient DNA binding requires dimerization with another bHLH protein, possibly with da. Expressed almost exclusively in the attachments sites of the somatic muscles to tendon cells in the epidermis.

The protein localises to the nucleus. Functionally, probably plays an important role in the differentiation of epidermal cells into the tendon cells that form the attachment sites for all muscles. This Drosophila melanogaster (Fruit fly) protein is Helix-loop-helix protein delilah (tx).